We begin with the raw amino-acid sequence, 247 residues long: NCT transcriptional regulatory complex subunit A (247 aa).

Residues 1–12 (MTDQDSTYRPRS) are compositionally biased toward basic and acidic residues. Disordered stretches follow at residues 1 to 31 (MTDQ…SPIY), 48 to 82 (FFAP…SPDM), and 212 to 247 (VPDQ…DDSD). Positions 13-22 (PDLSTFQSSI) are enriched in polar residues.

Belongs to the NC2 alpha/DRAP1 family. As to quaternary structure, forms the NCT transcriptional regulatory complex with nctB and mot1.

It localises to the nucleus. In terms of biological role, part of the NCT transcriptional regulatory complex that acts as a key regulator of ergosterol biosynthesis and the azole exporter cdr1B. The NCT complex binds the promoters of genes linked to azole susceptibility, and especially represses the expression of cdr1B transporter. This is NCT transcriptional regulatory complex subunit A from Aspergillus fumigatus (strain CBS 144.89 / FGSC A1163 / CEA10) (Neosartorya fumigata).